The chain runs to 217 residues: Probable transaldolase (217 aa).

Lys-83 (schiff-base intermediate with substrate) is an active-site residue.

This sequence belongs to the transaldolase family. Type 3B subfamily.

The protein resides in the cytoplasm. The enzyme catalyses D-sedoheptulose 7-phosphate + D-glyceraldehyde 3-phosphate = D-erythrose 4-phosphate + beta-D-fructose 6-phosphate. It participates in carbohydrate degradation; pentose phosphate pathway; D-glyceraldehyde 3-phosphate and beta-D-fructose 6-phosphate from D-ribose 5-phosphate and D-xylulose 5-phosphate (non-oxidative stage): step 2/3. In terms of biological role, transaldolase is important for the balance of metabolites in the pentose-phosphate pathway. The chain is Probable transaldolase from Rhizobium meliloti (strain 1021) (Ensifer meliloti).